The sequence spans 314 residues: Ribosomal RNA small subunit methyltransferase H (314 aa).

Residues 37–39, aspartate 57, phenylalanine 84, aspartate 105, and glutamine 112 each bind S-adenosyl-L-methionine; that span reads GSH.

The protein belongs to the methyltransferase superfamily. RsmH family.

It is found in the cytoplasm. It carries out the reaction cytidine(1402) in 16S rRNA + S-adenosyl-L-methionine = N(4)-methylcytidine(1402) in 16S rRNA + S-adenosyl-L-homocysteine + H(+). Specifically methylates the N4 position of cytidine in position 1402 (C1402) of 16S rRNA. The sequence is that of Ribosomal RNA small subunit methyltransferase H from Fusobacterium nucleatum subsp. nucleatum (strain ATCC 25586 / DSM 15643 / BCRC 10681 / CIP 101130 / JCM 8532 / KCTC 2640 / LMG 13131 / VPI 4355).